We begin with the raw amino-acid sequence, 426 residues long: Enolase (426 aa).

Positions 32–53 are disordered; that stretch reads TGRAAVPSGASTGAYEAHEQRD. A (2R)-2-phosphoglycerate-binding site is contributed by Gln-163. The active-site Proton donor is the Glu-205. Residues Asp-242, Glu-285, and Asp-312 each coordinate Mg(2+). The (2R)-2-phosphoglycerate site is built by Lys-337, Arg-366, Ser-367, and Lys-388. The active-site Proton acceptor is Lys-337.

This sequence belongs to the enolase family. Mg(2+) is required as a cofactor.

It is found in the cytoplasm. It localises to the secreted. The protein resides in the cell surface. The enzyme catalyses (2R)-2-phosphoglycerate = phosphoenolpyruvate + H2O. It functions in the pathway carbohydrate degradation; glycolysis; pyruvate from D-glyceraldehyde 3-phosphate: step 4/5. In terms of biological role, catalyzes the reversible conversion of 2-phosphoglycerate (2-PG) into phosphoenolpyruvate (PEP). It is essential for the degradation of carbohydrates via glycolysis. In Hyphomonas neptunium (strain ATCC 15444), this protein is Enolase.